The chain runs to 446 residues: Glycogen synthase (446 aa).

Arginine 15 is an ADP-alpha-D-glucose binding site.

Belongs to the glycosyltransferase 1 family. Bacterial/plant glycogen synthase subfamily.

The enzyme catalyses [(1-&gt;4)-alpha-D-glucosyl](n) + ADP-alpha-D-glucose = [(1-&gt;4)-alpha-D-glucosyl](n+1) + ADP + H(+). It participates in glycan biosynthesis; glycogen biosynthesis. Its function is as follows. Synthesizes alpha-1,4-glucan chains using ADP-glucose. In Deinococcus deserti (strain DSM 17065 / CIP 109153 / LMG 22923 / VCD115), this protein is Glycogen synthase.